The chain runs to 574 residues: Proline--tRNA ligase (574 aa).

The protein belongs to the class-II aminoacyl-tRNA synthetase family. ProS type 1 subfamily. As to quaternary structure, homodimer.

The protein localises to the cytoplasm. It carries out the reaction tRNA(Pro) + L-proline + ATP = L-prolyl-tRNA(Pro) + AMP + diphosphate. In terms of biological role, catalyzes the attachment of proline to tRNA(Pro) in a two-step reaction: proline is first activated by ATP to form Pro-AMP and then transferred to the acceptor end of tRNA(Pro). As ProRS can inadvertently accommodate and process non-cognate amino acids such as alanine and cysteine, to avoid such errors it has two additional distinct editing activities against alanine. One activity is designated as 'pretransfer' editing and involves the tRNA(Pro)-independent hydrolysis of activated Ala-AMP. The other activity is designated 'posttransfer' editing and involves deacylation of mischarged Ala-tRNA(Pro). The misacylated Cys-tRNA(Pro) is not edited by ProRS. This chain is Proline--tRNA ligase, found in Ralstonia nicotianae (strain ATCC BAA-1114 / GMI1000) (Ralstonia solanacearum).